The following is a 328-amino-acid chain: MQSIGIKGMGYYVPENVFTNFDFEKIIDTSDEWIRTRTGIIERRFASKDQATSDLATEASLKAIKNAKISKEDVDMIILATTTADYIAQGAACIVQNKLGLKKIPCFDLNAACTGFIYGLEVAYSLVKSGLYKNILVIGAETLSRIVDMQNRNTCVLFGDGAAAAIIGEVEKGYGFLGFSIGAEGEDNMILKVPAGGSKKPNNEETIKNRENFVIMKGQDVFKFAVSTLPKVTSDALEKAKLKVNDLSMVFPHQANLRIIESAAKRMKFPLEKFYMNLSRYGNTSSASVGIALGEAIEKGLVKKGDNIALTGFGGGLTYGSTIIKWAY.

Active-site residues include Cys-113 and His-253. The ACP-binding stretch occupies residues 254 to 258 (QANLR). The active site involves Asn-283.

It belongs to the thiolase-like superfamily. FabH family. Homodimer.

Its subcellular location is the cytoplasm. It carries out the reaction malonyl-[ACP] + acetyl-CoA + H(+) = 3-oxobutanoyl-[ACP] + CO2 + CoA. Its pathway is lipid metabolism; fatty acid biosynthesis. In terms of biological role, catalyzes the condensation reaction of fatty acid synthesis by the addition to an acyl acceptor of two carbons from malonyl-ACP. Catalyzes the first condensation reaction which initiates fatty acid synthesis and may therefore play a role in governing the total rate of fatty acid production. Possesses both acetoacetyl-ACP synthase and acetyl transacylase activities. Its substrate specificity determines the biosynthesis of branched-chain and/or straight-chain of fatty acids. This Fusobacterium nucleatum subsp. nucleatum (strain ATCC 25586 / DSM 15643 / BCRC 10681 / CIP 101130 / JCM 8532 / KCTC 2640 / LMG 13131 / VPI 4355) protein is Beta-ketoacyl-[acyl-carrier-protein] synthase III.